Here is a 607-residue protein sequence, read N- to C-terminus: MSSGLRAADFPRWKRHISEQLRRRDRLQRQAFEEIILQYNKLLEKSDLHSVLAQKLQAEKHDVPNRHEISPGHDGTWNDSQLQEMAQLRIKHQEELTELHKKRGELAQLVIDLNNQMQRKDREMQMNEAKIAECLQTISDLETECLDLRTKLCDLERANQTLKDEYDALQITFTALEGKLRKTTEENQELVTRWMAEKAQEANRLNAENEKDSRRRQARLQKELAEAAKEPLPVEQDDDIEVIVDETSDHTEETSPVRAISRAATKRLSQPAGGLLDSITNIFGRRSVSSFPVPQDNVDTHPGSGKEVRVPTTALCVFDAHDGEVNAVQFSPGSRLLATGGMDRRVKLWEVFGEKCEFKGSLSGSNAGITSIEFDSAGSYLLAASNDFASRIWTVDDSRLRHTLTGHSGKVLSAKFLLDNARIVSGSHDRTLKHWDLRSKVCIKTVFAGSSCNDIVCTEQCVMSGHFDKKIRFWDIRSESIVREMELLGKITALDLNPERTELLSCSRDDLLKVIDLRTNAIKQTFSAPGFKCGSDWTRVVFSPDGSYVAAGSAEGSLYTWSVLTGKVEKVLSKQHSSSINAVAWSPSGLHVVSVDKGCKAVLWAQY.

An interaction with ATG5 region spans residues 13 to 43 (WKRHISEQLRRRDRLQRQAFEEIILQYNKLL). The stretch at 79–230 (DSQLQEMAQL…QKELAEAAKE (152 aa)) forms a coiled coil. S139 is subject to Phosphoserine. A WIPI2-binding region spans residues 207 to 230 (AENEKDSRRRQARLQKELAEAAKE). The interval 230 to 242 (EPLPVEQDDDIEV) is RB1CC1-binding. S269 and S287 each carry phosphoserine. Residues 296–299 (DNVD) carry the Caspase cleavage motif. 7 WD repeats span residues 320 to 359 (AHDG…CEFK), 364 to 403 (GSNA…LRHT), 406 to 445 (GHSG…CIKT), 447 to 484 (FAGS…IVRE), 486 to 525 (ELLG…IKQT), 532 to 573 (KCGS…KVLS), and 575 to 607 (QHSS…WAQY).

Belongs to the WD repeat ATG16 family. In terms of assembly, homodimer. Homooligomer. Heterooligomer with ATG16L2. Interacts with WIPI1. Interacts with WIPI2. Interacts with RB1CC1; the interaction is required for ULK1 complex-dependent autophagy. Interacts with ATG5. Part of the minor complex composed of 4 sets of ATG12-ATG5 and ATG16L1 (400 kDa); this complex interacts with ATG3 leading to disruption of ATG7 interaction and promotion of ATG8-like proteins lipidation. Part of the major complex composed of 8 sets of ATG12-ATG5 and ATG16L1 (800 kDa). Interacts with RAB33B (GTP- and GDP-bound forms); the complex consists of a tetramer where two RAB33B molecules bind independently one molecule of the ATG16L1 homodimer; the interaction promotes ATG12-ATG5-ATG16L1 complex recruitment to phagophores. Interacts (via WD repeats) with TMEM59; the interaction mediates unconventional autophagic activity of TMEM59. Interacts with TLR2. Interacts (via WD repeats) with MEFV. Interacts with PPP1CA; the interaction dephosphorylates ATG16L1 causing dissociation of ATG12-ATG5-ATG16L1 complex. Interacts (via N-terminal) with CLTC. Interacts with NOD1. Interacts with NOD2. Interacts with TUFM. Interacts with TRIM16. Interacts (via WD repeats) with SPATA33. Interacts with IRGM. Proteolytic cleavage by activated CASP3 leads to degradation and may regulate autophagy upon cellular stress and apoptotic stimuli. In terms of processing, phosphorylation at Ser-139 promotes association with the ATG12-ATG5 conjugate to form the ATG12-ATG5-ATG16L1 complex.

The protein resides in the cytoplasm. The protein localises to the preautophagosomal structure membrane. It localises to the endosome membrane. It is found in the lysosome membrane. In terms of biological role, plays an essential role in both canonical and non-canonical autophagy: interacts with ATG12-ATG5 to mediate the lipidation to ATG8 family proteins (MAP1LC3A, MAP1LC3B, MAP1LC3C, GABARAPL1, GABARAPL2 and GABARAP). Acts as a molecular hub, coordinating autophagy pathways via distinct domains that support either canonical or non-canonical signaling. During canonical autophagy, interacts with ATG12-ATG5 to mediate the conjugation of phosphatidylethanolamine (PE) to ATG8 proteins, to produce a membrane-bound activated form of ATG8. Thereby, controls the elongation of the nascent autophagosomal membrane. As part of the ATG8 conjugation system with ATG5 and ATG12, required for recruitment of LRRK2 to stressed lysosomes and induction of LRRK2 kinase activity in response to lysosomal stress. Also involved in non-canonical autophagy, a parallel pathway involving conjugation of ATG8 proteins to single membranes at endolysosomal compartments, probably by catalyzing conjugation of phosphatidylserine (PS) to ATG8. Non-canonical autophagy plays a key role in epithelial cells to limit lethal infection by influenza A (IAV) virus. Regulates mitochondrial antiviral signaling (MAVS)-dependent type I interferon (IFN-I) production. Negatively regulates NOD1- and NOD2-driven inflammatory cytokine response. Instead, promotes an autophagy-dependent antibacterial pathway together with NOD1 or NOD2. Plays a role in regulating morphology and function of Paneth cell. This Pongo abelii (Sumatran orangutan) protein is Autophagy-related protein 16-1.